A 551-amino-acid chain; its full sequence is Glucans biosynthesis protein D (551 aa).

A signal peptide (tat-type signal) is located at residues 1–32 (MDRRRFIKGSMAMAAVCGTSGIASLFSQAAFA).

It belongs to the OpgD/OpgG family. Predicted to be exported by the Tat system. The position of the signal peptide cleavage has not been experimentally proven.

Its subcellular location is the periplasm. The protein operates within glycan metabolism; osmoregulated periplasmic glucan (OPG) biosynthesis. Its function is as follows. Probably involved in the control of the structural glucose backbone of osmoregulated periplasmic glucans (OPGs). This chain is Glucans biosynthesis protein D, found in Shigella dysenteriae serotype 1 (strain Sd197).